A 154-amino-acid polypeptide reads, in one-letter code: MNRVLCVVIIVLAVGYGALWLATNHYRDNALTYKAQRDKKARELEQANATITDMQVRQRDVAALDAKYSRELADARAENETLRADVAAGRKRLRINATCSGTVREATGTSGVDNATGPRLADTAERDYFILRERLITMQKQLEGTQKYINEQCR.

Residues 1–3 (MNR) lie on the Cytoplasmic side of the membrane. Residues 4-24 (VLCVVIIVLAVGYGALWLATN) traverse the membrane as a helical; Signal-anchor for type II membrane protein segment. The Periplasmic segment spans residues 25 to 154 (HYRDNALTYK…TQKYINEQCR (130 aa)). Residues 37 to 92 (RDKKARELEQANATITDMQVRQRDVAALDAKYSRELADARAENETLRADVAAGRKR) are a coiled coil.

This sequence belongs to the Lambdavirus i-spanin family. Homodimer; disulfide-linked. Interacts (via C-terminus) with the spanin outer lipoprotein subunit (via C-terminus). Part of the spanin complex which spans the entire periplasmic space. The spanin complex is composed of one homodimer of the i-spanin linked by intermolecular disulfide bonds involving two Cys residues and one homodimer of the o-spanin covalently linked by an intermolecular disulfide bond involving one Cys.

It is found in the host cell inner membrane. In terms of biological role, component of the spanin complex that disrupts the host outer membrane and participates in cell lysis during virus exit. The spanin complex conducts the final step in host lysis by disrupting the outer membrane after holin and endolysin have permeabilized the inner membrane and degraded the host peptidoglycans. Host outer membrane disruption is due to local fusion between the inner and outer membrane performed by the spanin complex. This Escherichia coli O157:H7 (Bacteriophage 933W) protein is Spanin, inner membrane subunit (Rz).